Here is a 360-residue protein sequence, read N- to C-terminus: Phospho-N-acetylmuramoyl-pentapeptide-transferase (360 aa).

A run of 10 helical transmembrane segments spans residues Ala26–Glu46, Met74–Gly94, Tyr97–Tyr117, Tyr134–Asn154, Val168–Ser188, Gly199–Ser219, Ser236–Phe256, Val263–Leu283, Ile288–Val308, and Val338–Lys358.

It belongs to the glycosyltransferase 4 family. MraY subfamily. Mg(2+) serves as cofactor.

The protein resides in the cell inner membrane. The catalysed reaction is UDP-N-acetyl-alpha-D-muramoyl-L-alanyl-gamma-D-glutamyl-meso-2,6-diaminopimeloyl-D-alanyl-D-alanine + di-trans,octa-cis-undecaprenyl phosphate = di-trans,octa-cis-undecaprenyl diphospho-N-acetyl-alpha-D-muramoyl-L-alanyl-D-glutamyl-meso-2,6-diaminopimeloyl-D-alanyl-D-alanine + UMP. The protein operates within cell wall biogenesis; peptidoglycan biosynthesis. Catalyzes the initial step of the lipid cycle reactions in the biosynthesis of the cell wall peptidoglycan: transfers peptidoglycan precursor phospho-MurNAc-pentapeptide from UDP-MurNAc-pentapeptide onto the lipid carrier undecaprenyl phosphate, yielding undecaprenyl-pyrophosphoryl-MurNAc-pentapeptide, known as lipid I. This is Phospho-N-acetylmuramoyl-pentapeptide-transferase from Shewanella oneidensis (strain ATCC 700550 / JCM 31522 / CIP 106686 / LMG 19005 / NCIMB 14063 / MR-1).